A 216-amino-acid chain; its full sequence is Orotate phosphoribosyltransferase (216 aa).

K30 contacts 5-phospho-alpha-D-ribose 1-diphosphate. Orotate is bound at residue 38–39 (FF). 5-phospho-alpha-D-ribose 1-diphosphate-binding positions include 75 to 76 (YK), R102, K103, K106, H108, and 128 to 136 (DDVITAGTA). Positions 132 and 160 each coordinate orotate.

The protein belongs to the purine/pyrimidine phosphoribosyltransferase family. PyrE subfamily. As to quaternary structure, homodimer. Mg(2+) is required as a cofactor.

The enzyme catalyses orotidine 5'-phosphate + diphosphate = orotate + 5-phospho-alpha-D-ribose 1-diphosphate. It functions in the pathway pyrimidine metabolism; UMP biosynthesis via de novo pathway; UMP from orotate: step 1/2. In terms of biological role, catalyzes the transfer of a ribosyl phosphate group from 5-phosphoribose 1-diphosphate to orotate, leading to the formation of orotidine monophosphate (OMP). The chain is Orotate phosphoribosyltransferase from Acinetobacter baumannii (strain ATCC 17978 / DSM 105126 / CIP 53.77 / LMG 1025 / NCDC KC755 / 5377).